Consider the following 271-residue polypeptide: 4,5-DOPA dioxygenase extradiol (271 aa).

Zn(2+) contacts are provided by histidine 22, histidine 57, histidine 177, and histidine 234.

Belongs to the DODA-type extradiol aromatic ring-opening dioxygenase family. Monomer. Requires Zn(2+) as cofactor.

It is found in the cytoplasm. It carries out the reaction L-dopa + O2 = 4-(L-alanin-3-yl)-2-hydroxy-cis,cis-muconate 6-semialdehyde + H(+). In terms of biological role, in vitro, opens the cyclic ring of dihydroxy-phenylalanine (DOPA) between carbons 4 and 5, thus producing an unstable seco-DOPA that rearranges nonenzymatically to betalamic acid. The physiological substrate is unknown. This chain is 4,5-DOPA dioxygenase extradiol (ygiD), found in Escherichia coli (strain K12).